The chain runs to 178 residues: Large ribosomal subunit protein uL6 (178 aa).

Belongs to the universal ribosomal protein uL6 family. Part of the 50S ribosomal subunit.

Its function is as follows. This protein binds to the 23S rRNA, and is important in its secondary structure. It is located near the subunit interface in the base of the L7/L12 stalk, and near the tRNA binding site of the peptidyltransferase center. This is Large ribosomal subunit protein uL6 from Francisella tularensis subsp. tularensis (strain WY96-3418).